The following is a 108-amino-acid chain: Thioredoxin (108 aa).

The region spanning 2 to 108 (NKIIELTDQN…LKDFLDENIK (107 aa)) is the Thioredoxin domain. A disulfide bridge links C32 with C35.

The protein belongs to the thioredoxin family.

Functionally, participates in various redox reactions through the reversible oxidation of its active center dithiol to a disulfide and catalyzes dithiol-disulfide exchange reactions. This Buchnera aphidicola subsp. Schizaphis graminum (strain Sg) protein is Thioredoxin (trxA).